We begin with the raw amino-acid sequence, 202 residues long: uncharacterized protein (202 aa).

The tract at residues methionine 1 to proline 20 is disordered. In terms of domain architecture, HTH tetR-type spans serine 19–valine 79.

This is an uncharacterized protein from Mycobacterium bovis (strain ATCC BAA-935 / AF2122/97).